The sequence spans 307 residues: S-methyl-5'-thioadenosine phosphorylase (307 aa).

Phosphate is bound by residues Ser-16, Arg-59–His-60, and Ser-92–Ala-93. Met-198 serves as a coordination point for substrate. Ser-199 contributes to the phosphate binding site. Asp-222–Asp-224 provides a ligand contact to substrate.

This sequence belongs to the PNP/MTAP phosphorylase family. MTAP subfamily. Homotrimer.

The protein localises to the cytoplasm. It is found in the nucleus. It catalyses the reaction S-methyl-5'-thioadenosine + phosphate = 5-(methylsulfanyl)-alpha-D-ribose 1-phosphate + adenine. Its pathway is amino-acid biosynthesis; L-methionine biosynthesis via salvage pathway; S-methyl-5-thio-alpha-D-ribose 1-phosphate from S-methyl-5'-thioadenosine (phosphorylase route): step 1/1. Functionally, catalyzes the reversible phosphorylation of S-methyl-5'-thioadenosine (MTA) to adenine and 5-methylthioribose-1-phosphate. Involved in the breakdown of MTA, a major by-product of polyamine biosynthesis. Responsible for the first step in the methionine salvage pathway after MTA has been generated from S-adenosylmethionine. Has broad substrate specificity with 6-aminopurine nucleosides as preferred substrates. In Schizosaccharomyces pombe (strain 972 / ATCC 24843) (Fission yeast), this protein is S-methyl-5'-thioadenosine phosphorylase.